Consider the following 345-residue polypeptide: Sesquiterpene synthase PILCRDRAFT_825684 (345 aa).

Mg(2+) contacts are provided by aspartate 91, asparagine 226, serine 230, and glutamate 234. Positions 91 to 95 (DELTD) match the DDXXD motif motif. Residues arginine 316 and tyrosine 317 each contribute to the (2E,6E)-farnesyl diphosphate site.

This sequence belongs to the terpene synthase family. The cofactor is Mg(2+).

It carries out the reaction (2E,6E)-farnesyl diphosphate = viridiflorene + diphosphate. In terms of biological role, terpene cyclase that catalyzes the cyclization of farnesyl diphosphate (FPP) to various sesquiterpenes, including beta-elemene, viridiflorene and gamma-cadinene. Gamma-cadinene is the major product of PILCRDRAFT_825684. The protein is Sesquiterpene synthase PILCRDRAFT_825684 of Piloderma croceum (strain F 1598).